Here is a 105-residue protein sequence, read N- to C-terminus: Large ribosomal subunit protein bL21 (105 aa).

This sequence belongs to the bacterial ribosomal protein bL21 family. In terms of assembly, part of the 50S ribosomal subunit. Contacts protein L20.

Functionally, this protein binds to 23S rRNA in the presence of protein L20. The polypeptide is Large ribosomal subunit protein bL21 (Phocaeicola vulgatus (strain ATCC 8482 / DSM 1447 / JCM 5826 / CCUG 4940 / NBRC 14291 / NCTC 11154) (Bacteroides vulgatus)).